The primary structure comprises 2465 residues: Protein DOP1A (2465 aa).

Disordered stretches follow at residues 559–600, 625–646, and 705–733; these read PSGQ…SSES, GAAA…TVGS, and TEHQ…KEKN. Over residues 633–646 the composition is skewed to low complexity; that stretch reads STSSETETASTVGS. Positions 707–733 are enriched in basic and acidic residues; sequence HQGDLGREQGETSKWDRNSQGDVKEKN. The residue at position 1266 (Ser-1266) is a Phosphoserine. Composition is skewed to basic and acidic residues over residues 1282–1291 and 1305–1315; these read EKETIVKESG and KKDDDKKKSSN. Residues 1282-1315 are disordered; the sequence is EKETIVKESGKQPGAKPKVKLARKKDDDKKKSSN.

It belongs to the DOP1 family.

Its subcellular location is the golgi apparatus membrane. In terms of biological role, may be involved in protein traffic between late Golgi and early endosomes. This is Protein DOP1A from Homo sapiens (Human).